Reading from the N-terminus, the 156-residue chain is Putative NrdI-like protein (156 aa).

In Streptococcus pneumoniae (strain ATCC BAA-255 / R6), this protein is Putative NrdI-like protein.